The primary structure comprises 435 residues: Methylenetetrahydrofolate--tRNA-(uracil-5-)-methyltransferase TrmFO (435 aa).

9–14 (GAGLAG) lines the FAD pocket.

Belongs to the MnmG family. TrmFO subfamily. FAD is required as a cofactor.

It is found in the cytoplasm. It catalyses the reaction uridine(54) in tRNA + (6R)-5,10-methylene-5,6,7,8-tetrahydrofolate + NADH + H(+) = 5-methyluridine(54) in tRNA + (6S)-5,6,7,8-tetrahydrofolate + NAD(+). The enzyme catalyses uridine(54) in tRNA + (6R)-5,10-methylene-5,6,7,8-tetrahydrofolate + NADPH + H(+) = 5-methyluridine(54) in tRNA + (6S)-5,6,7,8-tetrahydrofolate + NADP(+). In terms of biological role, catalyzes the folate-dependent formation of 5-methyl-uridine at position 54 (M-5-U54) in all tRNAs. The protein is Methylenetetrahydrofolate--tRNA-(uracil-5-)-methyltransferase TrmFO of Staphylococcus aureus (strain Newman).